The following is a 172-amino-acid chain: MDYFTLFGLPIRYDVDGGLLASRFQALQRQFHPDRYAASPERERMLAVQQAATINNAYQALKHPLKRAEYMLSLHGFDVNNEQHTMKDTAFLMEQLELREELDAISQRSDADVALSAFAGRLQAMIVKRCSHMRDEFDNETWTDAADTVRKLRFLDKLQQQVEELEEQLLDR.

A J domain is found at 2–74 (DYFTLFGLPI…LKRAEYMLSL (73 aa)).

It belongs to the HscB family. In terms of assembly, interacts with HscA and stimulates its ATPase activity. Interacts with IscU.

Its function is as follows. Co-chaperone involved in the maturation of iron-sulfur cluster-containing proteins. Seems to help targeting proteins to be folded toward HscA. The sequence is that of Co-chaperone protein HscB from Pectobacterium carotovorum subsp. carotovorum (strain PC1).